A 367-amino-acid chain; its full sequence is tRNA-specific 2-thiouridylase MnmA (367 aa).

ATP is bound by residues G13–S20 and M39. An interaction with target base in tRNA region spans residues N99–D101. Residue C104 is the Nucleophile of the active site. A disulfide bridge links C104 with C200. Residue G128 participates in ATP binding. An interaction with tRNA region spans residues K150–Q152. The Cysteine persulfide intermediate role is filled by C200. The interval R307 to Y308 is interaction with tRNA.

This sequence belongs to the MnmA/TRMU family.

Its subcellular location is the cytoplasm. The enzyme catalyses S-sulfanyl-L-cysteinyl-[protein] + uridine(34) in tRNA + AH2 + ATP = 2-thiouridine(34) in tRNA + L-cysteinyl-[protein] + A + AMP + diphosphate + H(+). Its function is as follows. Catalyzes the 2-thiolation of uridine at the wobble position (U34) of tRNA, leading to the formation of s(2)U34. The chain is tRNA-specific 2-thiouridylase MnmA from Neisseria meningitidis serogroup C (strain 053442).